Consider the following 127-residue polypeptide: Aspartate 1-decarboxylase (127 aa).

The active-site Schiff-base intermediate with substrate; via pyruvic acid is Ser-25. Ser-25 bears the Pyruvic acid (Ser) mark. Thr-57 contributes to the substrate binding site. Catalysis depends on Tyr-58, which acts as the Proton donor. Residue 73–75 participates in substrate binding; it reads GAA.

The protein belongs to the PanD family. Heterooctamer of four alpha and four beta subunits. It depends on pyruvate as a cofactor. In terms of processing, is synthesized initially as an inactive proenzyme, which is activated by self-cleavage at a specific serine bond to produce a beta-subunit with a hydroxyl group at its C-terminus and an alpha-subunit with a pyruvoyl group at its N-terminus.

The protein resides in the cytoplasm. The catalysed reaction is L-aspartate + H(+) = beta-alanine + CO2. Its pathway is cofactor biosynthesis; (R)-pantothenate biosynthesis; beta-alanine from L-aspartate: step 1/1. Catalyzes the pyruvoyl-dependent decarboxylation of aspartate to produce beta-alanine. The polypeptide is Aspartate 1-decarboxylase (Clostridium botulinum (strain ATCC 19397 / Type A)).